The chain runs to 312 residues: Fibrinogen-like protein 1 (312 aa).

The N-terminal stretch at 1 to 22 is a signal peptide; the sequence is MAKVFSFILVTTALTMGREISA. Residues 23–61 adopt a coiled-coil conformation; sequence LEDCAQEQMRLRAQVRLLETRVKQQQVKIKQLLQENEVQ. A Fibrinogen C-terminal domain is found at 74-306; it reads LGSKRQYADC…SVVMKIRPND (233 aa). Intrachain disulfides connect Cys-83/Cys-112 and Cys-248/Cys-261.

In terms of assembly, homodimer. Interacts (via the Fibrinogen C-terminal domain) with LAG3 (via Ig-like domains 1 and 2). Under normal conditions, liver-specific.

It localises to the secreted. In terms of biological role, immune suppressive molecule that inhibits antigen-specific T-cell activation by acting as a major ligand of LAG3. Responsible for LAG3 T-cell inhibitory function. Binds LAG3 independently from MHC class II (MHC-II). Secreted by, and promotes growth of, hepatocytes. In Homo sapiens (Human), this protein is Fibrinogen-like protein 1.